The primary structure comprises 90 residues: Darcynin 1 (90 aa).

The protein belongs to the darcynin family.

This Acinetobacter baumannii (strain ATCC 17978 / DSM 105126 / CIP 53.77 / LMG 1025 / NCDC KC755 / 5377) protein is Darcynin 1.